Reading from the N-terminus, the 210-residue chain is MKEVAVYQIPVLSPSGRRELAADLPAEINPHLLWEVVRWQLAKRRRGTASTKTRGEVAYSGRKIWPQKHTGRARHGDIGAPIFVGGGVVFGPKPRDYSYTLPKKVRKKGLAMAVADRAREGKLLLVEAFAGVERQDQAIPAWAKEAGLDGSESVLLVTGNELVRRAARNLPWVVTLAPEGLNVYDIVRTERLVMDLDAWEVFQNRIGGEA.

The protein belongs to the universal ribosomal protein uL4 family. Part of the 50S ribosomal subunit.

Functionally, one of the primary rRNA binding proteins, this protein initially binds near the 5'-end of the 23S rRNA. It is important during the early stages of 50S assembly. It makes multiple contacts with different domains of the 23S rRNA in the assembled 50S subunit and ribosome. In terms of biological role, forms part of the polypeptide exit tunnel. In Thermus thermophilus, this protein is Large ribosomal subunit protein uL4 (rplD).